We begin with the raw amino-acid sequence, 169 residues long: Crossover junction endodeoxyribonuclease RuvC (169 aa).

Active-site residues include Asp-11, Glu-71, and Asp-143. Residues Asp-11, Glu-71, and Asp-143 each contribute to the Mg(2+) site.

This sequence belongs to the RuvC family. In terms of assembly, homodimer which binds Holliday junction (HJ) DNA. The HJ becomes 2-fold symmetrical on binding to RuvC with unstacked arms; it has a different conformation from HJ DNA in complex with RuvA. In the full resolvosome a probable DNA-RuvA(4)-RuvB(12)-RuvC(2) complex forms which resolves the HJ. It depends on Mg(2+) as a cofactor.

It localises to the cytoplasm. The enzyme catalyses Endonucleolytic cleavage at a junction such as a reciprocal single-stranded crossover between two homologous DNA duplexes (Holliday junction).. In terms of biological role, the RuvA-RuvB-RuvC complex processes Holliday junction (HJ) DNA during genetic recombination and DNA repair. Endonuclease that resolves HJ intermediates. Cleaves cruciform DNA by making single-stranded nicks across the HJ at symmetrical positions within the homologous arms, yielding a 5'-phosphate and a 3'-hydroxyl group; requires a central core of homology in the junction. The consensus cleavage sequence is 5'-(A/T)TT(C/G)-3'. Cleavage occurs on the 3'-side of the TT dinucleotide at the point of strand exchange. HJ branch migration catalyzed by RuvA-RuvB allows RuvC to scan DNA until it finds its consensus sequence, where it cleaves and resolves the cruciform DNA. The chain is Crossover junction endodeoxyribonuclease RuvC from Rhizobium etli (strain ATCC 51251 / DSM 11541 / JCM 21823 / NBRC 15573 / CFN 42).